The chain runs to 612 residues: Dihydroxy-acid dehydratase (612 aa).

Residue D81 coordinates Mg(2+). C122 is a [2Fe-2S] cluster binding site. D123 and K124 together coordinate Mg(2+). Residue K124 is modified to N6-carboxylysine. Position 193 (C193) interacts with [2Fe-2S] cluster. E489 provides a ligand contact to Mg(2+). S515 (proton acceptor) is an active-site residue.

It belongs to the IlvD/Edd family. Homodimer. The cofactor is [2Fe-2S] cluster. It depends on Mg(2+) as a cofactor.

It catalyses the reaction (2R)-2,3-dihydroxy-3-methylbutanoate = 3-methyl-2-oxobutanoate + H2O. The enzyme catalyses (2R,3R)-2,3-dihydroxy-3-methylpentanoate = (S)-3-methyl-2-oxopentanoate + H2O. It participates in amino-acid biosynthesis; L-isoleucine biosynthesis; L-isoleucine from 2-oxobutanoate: step 3/4. It functions in the pathway amino-acid biosynthesis; L-valine biosynthesis; L-valine from pyruvate: step 3/4. Its function is as follows. Functions in the biosynthesis of branched-chain amino acids. Catalyzes the dehydration of (2R,3R)-2,3-dihydroxy-3-methylpentanoate (2,3-dihydroxy-3-methylvalerate) into 2-oxo-3-methylpentanoate (2-oxo-3-methylvalerate) and of (2R)-2,3-dihydroxy-3-methylbutanoate (2,3-dihydroxyisovalerate) into 2-oxo-3-methylbutanoate (2-oxoisovalerate), the penultimate precursor to L-isoleucine and L-valine, respectively. In Stenotrophomonas maltophilia (strain K279a), this protein is Dihydroxy-acid dehydratase.